The chain runs to 110 residues: METIAKHRYARTSAQKARLVADLIRGKKVAQALEILTFTNKKAAALVKKVLESAIANAEHNDGADVDDLKVAKIFVDEGPSMKRVMPRAKGRADRILKRTSHITVVVSDR.

The protein belongs to the universal ribosomal protein uL22 family. In terms of assembly, part of the 50S ribosomal subunit.

In terms of biological role, this protein binds specifically to 23S rRNA; its binding is stimulated by other ribosomal proteins, e.g. L4, L17, and L20. It is important during the early stages of 50S assembly. It makes multiple contacts with different domains of the 23S rRNA in the assembled 50S subunit and ribosome. Functionally, the globular domain of the protein is located near the polypeptide exit tunnel on the outside of the subunit, while an extended beta-hairpin is found that lines the wall of the exit tunnel in the center of the 70S ribosome. The polypeptide is Large ribosomal subunit protein uL22 (Actinobacillus pleuropneumoniae serotype 5b (strain L20)).